The chain runs to 483 residues: Glutamate--tRNA ligase (483 aa).

Residues 11-21 (PSPTGLLHIGN) carry the 'HIGH' region motif. The 'KMSKS' region motif lies at 255–259 (KLSKR). Position 258 (Lys258) interacts with ATP.

The protein belongs to the class-I aminoacyl-tRNA synthetase family. Glutamate--tRNA ligase type 1 subfamily. Monomer.

The protein localises to the cytoplasm. The catalysed reaction is tRNA(Glu) + L-glutamate + ATP = L-glutamyl-tRNA(Glu) + AMP + diphosphate. In terms of biological role, catalyzes the attachment of glutamate to tRNA(Glu) in a two-step reaction: glutamate is first activated by ATP to form Glu-AMP and then transferred to the acceptor end of tRNA(Glu). In Lactococcus lactis subsp. cremoris (strain MG1363), this protein is Glutamate--tRNA ligase.